Consider the following 340-residue polypeptide: Polyporopepsin (340 aa).

In terms of domain architecture, Peptidase A1 spans 14–330 (YVVNVGVGSP…DTTNKRLGLA (317 aa)). D32 is a catalytic residue. An N-linked (GlcNAc...) asparagine glycan is attached at N192. D212 is an active-site residue. A glycan (N-linked (GlcNAc...) asparagine) is linked at N238.

The protein belongs to the peptidase A1 family.

The catalysed reaction is Milk clotting activity, broad specificity, but fails to cleave 15-Leu-|-Tyr-16 or 16-Tyr-|-Leu-17 of insulin B chain.. This Irpex lacteus (Milk-white toothed polypore) protein is Polyporopepsin.